Reading from the N-terminus, the 943-residue chain is MLKLLLGDPNTRKLKRYQPMVEEINLLEEDVSILTDDELRNETHNLKSNISSELNIKKQKELLEETLPKAFAIVREASKRVLEMRHFDVQLIGGMVLHEGQIAEMKTGEGKTLVATLPCYLNALTGKGVHVVTVNDYLARRDAEWMGQVHRFLGLSVGLIQQDMSPAERKKNYACDITYATNSELGFDYLRDNMATEIEEVVQRKFNYCVIDEVDSILIDEARTPLIISGQIERPQEKYQKAAELSLSLIKAKELSKDGIDPEGDYEVDEKQRSCILTDQGFAKCEEALKVNDLYDPKDPWAHYITNALKAKELFVKDVNYIIKKDEAVIVDEFTGRVMPGRRWSDGQHQAIEAKEGLKIQPETQTLASITYQNFFLLYPGLAGMTGTAKTEEVEFEKTYKLESTVVPTNQIRKRQDWADQVFKTELGKWKAVANETAEIHRNGRPVLVGTTSVEKSELLSSLLFEQQIPHNLLNAKPENVEREAEIVAQAGRSGAVTIATNMAGRGTDIILGGNSDYMARLKLKETLMPLLVKPDNEHKPPIPQQRNSKSGGGFSANVDSIANKNTKSGVDSLFPCQLGEDIKRKLSLLSNELVKNWGDRSLTILELDDKIATAAEKAPTEDKLIQSLRESLSEVKNEYEKVLIHEEENVRNAGGLHVIGTERHESRRVDNQLRGRAGRQGDLGSTRFFLSLEDNLLRIFGGDRVANLMNAFRVDEDMPIESGMLTRSLESAQKKVETYYYDIRKQVFEYDEVMNNQRKAVYNERLRVLKGNDLKKQVIGYGERTMEEIVEAYINPDLPPEEWDIDQLISKVKEFIYLLNDLKSEDVSVLSIEELKNYLQEQLRIAYDLKEAQIEKFRPGLMREAERFFILQQIDNLWREHLQSMDSLRESVGLRGYGQKDPLIEYKNEGYDMFLEMMTNMRRNVIYSMFMFQPKSEKVTNN.

ATP-binding positions include Gln90, 108 to 112 (GEGKT), and Asp509. The interval 534-561 (KPDNEHKPPIPQQRNSKSGGGFSANVDS) is disordered.

The protein belongs to the SecA family. In terms of assembly, monomer and homodimer. Part of the essential Sec protein translocation apparatus which comprises SecA, SecYEG and auxiliary proteins SecDF. Other proteins may also be involved.

The protein localises to the cell inner membrane. It localises to the cellular thylakoid membrane. It is found in the cytoplasm. It catalyses the reaction ATP + H2O + cellular proteinSide 1 = ADP + phosphate + cellular proteinSide 2.. In terms of biological role, part of the Sec protein translocase complex. Interacts with the SecYEG preprotein conducting channel. Has a central role in coupling the hydrolysis of ATP to the transfer of proteins into and across the cell membrane, serving as an ATP-driven molecular motor driving the stepwise translocation of polypeptide chains across the membrane. Probably participates in protein translocation into and across both the cytoplasmic and thylakoid membranes in cyanobacterial cells. This Prochlorococcus marinus subsp. pastoris (strain CCMP1986 / NIES-2087 / MED4) protein is Protein translocase subunit SecA.